The following is a 651-amino-acid chain: MQSFRKIWNKPRPDDWMPLARFYYADSALNDIASELDSFDGRRDPDRCNALVTRLRVAQDRVLHIITEMLIHLYPREQDRACRDFRIKFPDEILHDTLPGQLWFGAECLSAGSNIIDHETESDLIRPLAKEVTKQLDILRDLLKNQSLRDPSAYNPVIKENLLKFDKLFAEFEYQYVSAMVPVKSVKEHDSQLDVAVLFSEVLSLALEKDLITQDLIDYCDPSVMIAIPRLGIVWGLLVYSEGALNVDVPAENLSEMFRPFYSLLVKIRNLLRILTPVELTRLETVLCKGETAVPEDSSSKLTMSDFRTNATDEEKAKNNQRVWMCDMPSDSTSSLDSDLRDSASEATSLASSGLTSPSSGSEDNLNRMVDKSDEELDDDVIETASSEENESDSNNENVEMVASSGDSSETESNSKENEEDVDEQATLQALAHETAEQLVAIKKKHEKHSKIIIPMQNEPRTLIDPKNLRSRFRSSEDLVHRLFVCIAGVADQLQTNYSSEIRKVLKIILQPSEVIPVYEVVNAQVANNSTEGEETGVEAQETLPLPAFMGVRWVPDEDCEQCTACSMPFNFVRRRHHCRNCGRIFCHKCSCNSISIPEHGYDRKVRVCNLCYVHRLNPFGCNEQSQASENNTGISSVAEQSSAQATSASS.

Residues 294 to 425 (VPEDSSSKLT…KENEEDVDEQ (132 aa)) are disordered. Over residues 300 to 310 (SKLTMSDFRTN) the composition is skewed to polar residues. Residues 345–363 (SEATSLASSGLTSPSSGSE) show a composition bias toward low complexity. The span at 373–394 (SDEELDDDVIETASSEENESDS) shows a compositional bias: acidic residues. Residues 395-412 (NNENVEMVASSGDSSETE) are compositionally biased toward low complexity. The FYVE-type zinc-finger motif lies at 557 to 617 (DEDCEQCTAC…VCNLCYVHRL (61 aa)). Zn(2+)-binding residues include Cys563, Cys566, Cys579, Cys582, Cys587, Cys590, Cys609, and Cys612.

The protein belongs to the lst-2 family.

Negative regulator of epidermal growth factor receptor (EGFR) signaling. The sequence is that of Lateral signaling target protein 2 (lst-2) from Caenorhabditis briggsae.